The sequence spans 141 residues: Ubiquitin-like protein ATG12 (141 aa).

The tract at residues 1-53 is disordered; that stretch reads MSEDSEVVLQLPSAPVGAGGESLPELSPETATPEPPSSAAVSPGTEEPPGDTK. Over residues 23–40 the composition is skewed to low complexity; sequence LPELSPETATPEPPSSAA. Glycine 141 participates in a covalent cross-link: Glycyl lysine isopeptide (Gly-Lys) (interchain with K-? in acceptor protein).

Belongs to the ATG12 family. In terms of assembly, forms a conjugate with ATG5. Part of the minor complex composed of 4 sets of ATG12-ATG5 and ATG16L1 (400 kDa); this complex interacts with ATG3 leading to disruption of ATG7 interaction and promotion of ATG8-like proteins lipidation. Forms an 800-kDa complex composed of ATG12-ATG5 and ATG16L2. Interacts with DHX58/RIG-1, IFIH1/MDA5 and MAVS/IPS-1 in monomeric form as well as in ATG12-ATG5 conjugate. The interaction with MAVS is further enhanced upon vesicular stomatitis virus (VSV) infection. Interacts with ATG3; this interaction is essential for phosphatidylethanolamine (PE)-conjugated ATG8-like proteins formation. Interacts with ATG7. Interacts with ATG10. The ATG12-ATG5 conjugate interacts with RAB33A; this interaction is bridged by ATG16L1 and promotes ATG12-ATG5-ATG16L1 complex recruitment to phagophores. Interacts with TECPR1. Interacts with SH3BGRL. The ATG12-ATG5 conjugate interacts with PDCD6IP (via the BRO1 domain); this interaction is bridged by ATG12 and promotes multiple PDCD6IP-mediated functions such as endolysosomal trafficking, macroautophagy and exosome biogenesis. Acetylated by EP300. Ubiquitous.

It is found in the cytoplasm. Its subcellular location is the preautophagosomal structure membrane. In terms of biological role, ubiquitin-like protein involved in autophagy vesicles formation. Conjugation with ATG5 through a ubiquitin-like conjugating system involving also ATG7 as an E1-like activating enzyme and ATG10 as an E2-like conjugating enzyme, is essential for its function. The ATG12-ATG5 conjugate acts as an E3-like enzyme which is required for lipidation of ATG8 family proteins and their association to the vesicle membranes. As part of the ATG8 conjugation system with ATG5 and ATG16L1, required for recruitment of LRRK2 to stressed lysosomes and induction of LRRK2 kinase activity in response to lysosomal stress. Functionally, (Microbial infection) May act as a proviral factor. In association with ATG5, negatively regulates the innate antiviral immune response by impairing the type I IFN production pathway upon vesicular stomatitis virus (VSV) infection. This chain is Ubiquitin-like protein ATG12, found in Mus musculus (Mouse).